A 287-amino-acid chain; its full sequence is Bifunctional protein FolD 2 (287 aa).

Residues 166 to 168 (GAS) and I232 each bind NADP(+).

It belongs to the tetrahydrofolate dehydrogenase/cyclohydrolase family. Homodimer.

It carries out the reaction (6R)-5,10-methylene-5,6,7,8-tetrahydrofolate + NADP(+) = (6R)-5,10-methenyltetrahydrofolate + NADPH. The catalysed reaction is (6R)-5,10-methenyltetrahydrofolate + H2O = (6R)-10-formyltetrahydrofolate + H(+). The protein operates within one-carbon metabolism; tetrahydrofolate interconversion. Its function is as follows. Catalyzes the oxidation of 5,10-methylenetetrahydrofolate to 5,10-methenyltetrahydrofolate and then the hydrolysis of 5,10-methenyltetrahydrofolate to 10-formyltetrahydrofolate. This Hydrogenovibrio crunogenus (strain DSM 25203 / XCL-2) (Thiomicrospira crunogena) protein is Bifunctional protein FolD 2.